We begin with the raw amino-acid sequence, 83 residues long: uncharacterized protein (83 aa).

The tract at residues 57–83 is disordered; it reads ESVEEEEEFEDYDEFEEEEEYYYDDEY.

This is an uncharacterized protein from Archaeoglobus fulgidus (strain ATCC 49558 / DSM 4304 / JCM 9628 / NBRC 100126 / VC-16).